The following is a 172-amino-acid chain: 3-hydroxydecanoyl-[acyl-carrier-protein] dehydratase (172 aa).

The active site involves histidine 71.

This sequence belongs to the thioester dehydratase family. FabA subfamily. In terms of assembly, homodimer.

The protein localises to the cytoplasm. It carries out the reaction a (3R)-hydroxyacyl-[ACP] = a (2E)-enoyl-[ACP] + H2O. It catalyses the reaction (3R)-hydroxydecanoyl-[ACP] = (2E)-decenoyl-[ACP] + H2O. The catalysed reaction is (2E)-decenoyl-[ACP] = (3Z)-decenoyl-[ACP]. Its pathway is lipid metabolism; fatty acid biosynthesis. In terms of biological role, necessary for the introduction of cis unsaturation into fatty acids. Catalyzes the dehydration of (3R)-3-hydroxydecanoyl-ACP to E-(2)-decenoyl-ACP and then its isomerization to Z-(3)-decenoyl-ACP. Can catalyze the dehydratase reaction for beta-hydroxyacyl-ACPs with saturated chain lengths up to 16:0, being most active on intermediate chain length. The protein is 3-hydroxydecanoyl-[acyl-carrier-protein] dehydratase of Escherichia coli (strain 55989 / EAEC).